The chain runs to 246 residues: Small ribosomal subunit protein uS2c (246 aa).

This sequence belongs to the universal ribosomal protein uS2 family.

It is found in the plastid. The protein resides in the chloroplast. This chain is Small ribosomal subunit protein uS2c (rps2), found in Pelargonium hortorum (Common geranium).